Here is a 64-residue protein sequence, read N- to C-terminus: MKSTLMTASLLILVLLSIIDYASVYAEFIDSEISLERQWINACFNVCMKISSDKKYCKYLCGKS.

The first 26 residues, 1–26 (MKSTLMTASLLILVLLSIIDYASVYA), serve as a signal peptide directing secretion. A propeptide spanning residues 27-36 (EFIDSEISLE) is cleaved from the precursor. 2 disulfide bridges follow: Cys-43–Cys-61 and Cys-47–Cys-57.

The protein belongs to the short scorpion toxin superfamily. Potassium channel inhibitor kappa-KTx family. Kappa-KTx 3 subfamily. As to expression, expressed by the venom gland.

The protein resides in the secreted. Potassium channel inhibitor (Kv). This chain is Potassium channel toxin kappa-KTx 3.4, found in Heterometrus petersii (Asian forest scorpion).